The chain runs to 256 residues: uncharacterized protein (256 aa).

Residues 201 to 214 (ACKEGVDSSCKEEG) show a composition bias toward basic and acidic residues. Residues 201-231 (ACKEGVDSSCKEEGGGCEEEGSGSEEDSDDS) form a disordered region. A compositionally biased stretch (acidic residues) spans 215–231 (GGCEEEGSGSEEDSDDS).

Its subcellular location is the mitochondrion. This is an uncharacterized protein from Zea mays (Maize).